The sequence spans 265 residues: Imidazole glycerol phosphate synthase subunit HisF (265 aa).

Active-site residues include D11 and D130.

This sequence belongs to the HisA/HisF family. As to quaternary structure, heterodimer of HisH and HisF.

Its subcellular location is the cytoplasm. It carries out the reaction 5-[(5-phospho-1-deoxy-D-ribulos-1-ylimino)methylamino]-1-(5-phospho-beta-D-ribosyl)imidazole-4-carboxamide + L-glutamine = D-erythro-1-(imidazol-4-yl)glycerol 3-phosphate + 5-amino-1-(5-phospho-beta-D-ribosyl)imidazole-4-carboxamide + L-glutamate + H(+). The protein operates within amino-acid biosynthesis; L-histidine biosynthesis; L-histidine from 5-phospho-alpha-D-ribose 1-diphosphate: step 5/9. IGPS catalyzes the conversion of PRFAR and glutamine to IGP, AICAR and glutamate. The HisF subunit catalyzes the cyclization activity that produces IGP and AICAR from PRFAR using the ammonia provided by the HisH subunit. The polypeptide is Imidazole glycerol phosphate synthase subunit HisF (Idiomarina loihiensis (strain ATCC BAA-735 / DSM 15497 / L2-TR)).